A 749-amino-acid chain; its full sequence is RNA-binding protein 5-B (749 aa).

Positions 1–88 (MGSDKRVSRS…YHSDGDYMDH (88 aa)) are disordered. Positions 102-182 (KTIMLRGLPI…KTIAMHYSNP (81 aa)) constitute an RRM 1 domain. Residues 185–214 (KFEDWLCNKCGLYNFRRRLKCFRCGAAKAE) form a RanBP2-type zinc finger. The 85-residue stretch at 241-325 (SAIILRNIGP…KTIGVDFAKS (85 aa)) folds into the RRM 2 domain. Disordered stretches follow at residues 425-471 (QMYQ…SVPD), 520-558 (PAADGTGQSGAQPNGANPGTSKEGKEKKEKPKSKTAQQI), 570-595 (NKQKENFKNSFQPLSSRDEERKESAA), and 626-680 (TEEE…NSNI). Low complexity predominate over residues 429–460 (QPGSPTQSGTSTAASTTPASTTSTEEATTPTA). Basic and acidic residues-rich tracts occupy residues 585 to 594 (SRDEERKESA) and 627 to 648 (EEEKPPNAKYRDRAAERREKYG). The G-patch domain maps to 677 to 723 (NSNIGNKMLQAMGWKEGSGLGRKSQGITAPIQAQVRMRGAGLGAKGS).

This sequence belongs to the RBM5/RBM10 family. In terms of assembly, component of the spliceosome A complex (also known as the prespliceosome). Appears to dissociate from the spliceosome upon formation of the spliceosome B complex (also known as the precatalytic spliceosome), in which the heterotrimeric U4/U6.U5 snRNPs are bound.

The protein localises to the nucleus. In terms of biological role, component of the spliceosome A complex. Regulates alternative splicing of a number of mRNAs. May modulate splice site pairing after recruitment of the U1 and U2 snRNPs to the 5' and 3' splice sites of the intron. The chain is RNA-binding protein 5-B (rbm5-b) from Xenopus laevis (African clawed frog).